A 283-amino-acid polypeptide reads, in one-letter code: CDP-abequose synthase (283 aa).

Residues 7–13, 48–49, Y129, and K133 contribute to the NAD(+) site; these read GGSGYIG and EF. Y129 functions as the Proton acceptor in the catalytic mechanism.

The protein belongs to the NAD(P)-dependent epimerase/dehydratase family.

It catalyses the reaction CDP-alpha-D-abequose + NADP(+) = CDP-4-dehydro-3,6-dideoxy-alpha-D-glucose + NADPH + H(+). The protein operates within bacterial outer membrane biogenesis; LPS O-antigen biosynthesis. Functionally, the CDP-abequose synthase is involved in lipopolysaccharides (LPS) synthesis containing abequose which are important antigens of the cell surface responsible for the serological O specificity. Derivatives of the 3,6-dideoxyhexose group have a particular highly immunogenic character. The chain is CDP-abequose synthase (rfbJ) from Yersinia pseudotuberculosis.